We begin with the raw amino-acid sequence, 359 residues long: Probable ribonucleotide transport ATP-binding protein mkl (359 aa).

The ABC transporter domain maps to 28-264; that stretch reads IEVNGLTKSF…DEPVVRQFLN (237 aa). 60–67 lines the ATP pocket; the sequence is GPSGTGKS.

Belongs to the ABC transporter superfamily.

Functionally, not known, could be involved in the transport of ribonucleotides. This is Probable ribonucleotide transport ATP-binding protein mkl (mkl) from Mycobacterium bovis (strain ATCC BAA-935 / AF2122/97).